We begin with the raw amino-acid sequence, 147 residues long: UPF0735 ACT domain-containing protein GK2605 (147 aa).

Residues 69-144 enclose the ACT domain; it reads TLFFHLEDRS…FVEKVEIVGS (76 aa).

This sequence belongs to the UPF0735 family.

The protein is UPF0735 ACT domain-containing protein GK2605 of Geobacillus kaustophilus (strain HTA426).